Consider the following 144-residue polypeptide: Flagellar assembly factor FliW (144 aa).

This sequence belongs to the FliW family. In terms of assembly, interacts with translational regulator CsrA and flagellin(s).

It localises to the cytoplasm. Acts as an anti-CsrA protein, binds CsrA and prevents it from repressing translation of its target genes, one of which is flagellin. Binds to flagellin and participates in the assembly of the flagellum. This Geobacillus sp. (strain WCH70) protein is Flagellar assembly factor FliW.